The sequence spans 337 residues: 6-phosphogluconolactonase (337 aa).

This sequence belongs to the cycloisomerase 2 family.

The enzyme catalyses 6-phospho-D-glucono-1,5-lactone + H2O = 6-phospho-D-gluconate + H(+). It functions in the pathway carbohydrate degradation; pentose phosphate pathway; D-ribulose 5-phosphate from D-glucose 6-phosphate (oxidative stage): step 2/3. In terms of biological role, catalyzes the hydrolysis of 6-phosphogluconolactone to 6-phosphogluconate. The protein is 6-phosphogluconolactonase of Blochmanniella pennsylvanica (strain BPEN).